We begin with the raw amino-acid sequence, 122 residues long: Large ribosomal subunit protein uL14c (122 aa).

It belongs to the universal ribosomal protein uL14 family. As to quaternary structure, part of the 50S ribosomal subunit.

It localises to the plastid. Its subcellular location is the chloroplast. Binds to 23S rRNA. The protein is Large ribosomal subunit protein uL14c of Gracilaria tenuistipitata var. liui (Red alga).